The primary structure comprises 325 residues: Dimethylallyltranstransferase (325 aa).

2 residues coordinate isopentenyl diphosphate: Arg54 and His84. Mg(2+) is bound by residues Asp91 and Asp95. Positions 91 to 95 (DRVVD) match the DDXXD motif motif. Arg101 provides a ligand contact to isopentenyl diphosphate. The DDXXD motif motif lies at 217 to 221 (RDIIA).

The protein belongs to the FPP/GGPP synthase family. Mg(2+) is required as a cofactor.

The enzyme catalyses isopentenyl diphosphate + dimethylallyl diphosphate = (2E)-geranyl diphosphate + diphosphate. It functions in the pathway isoprenoid biosynthesis; geranyl diphosphate biosynthesis; geranyl diphosphate from dimethylallyl diphosphate and isopentenyl diphosphate: step 1/1. Its function is as follows. Catalyzes the addition of isopentenyl diphosphate (IPP) onto dimethylallyl diphosphate (DMAPP) to form geranyl pyrophosphate (GPP). Is probably involved in the biosynthesis of decaprenyl diphosphate, which is required for mycobacterial cell wall synthesis. Could be required for host endothelial-cell invasion and/or intracellular survival. This Mycobacterium tuberculosis (strain ATCC 25618 / H37Rv) protein is Dimethylallyltranstransferase.